The chain runs to 500 residues: MQDQYILALDQGTTSSRAMLFDRQGNIVSIAQKEFEQIYPQPGWVEHDPQEIWSTQAGVAAEAVTRTGLNGTSIAAIGITNQRETTIVWDRETGQPVYNAIVWQDRRTADFCDSLKKQGLEAKVRAKTGLPIDSYFSATKIRWILDNVPGARDKARQGKLAFGTVDSWLVWNFTKHELHVTDVTNASRTMLFNIHTREWDSELLELLDIPRSMLPDVKASSEIYGHTKTTVFASKIPLAGIAGDQHAALFGQMCTTSGMVKNTYGTGCFLMMNTGDKPIESKNNLVTTIAWQIGDDVQYALEGSIFIAGAVVQWLRDGVGIIKTAAEIEALAASVPHTDGVYLVPAFAGLGAPHWNARARGSVFGVTRGTTAAHLARAALDSIAYQSLDVLAAMEADSGISIGELRVDGGASANDLLMQFQADLLGVDAVRPQITETTALGAAYLAGLAIGYWKNLDEVRSQWQLDRRFSPSMPKEQVEQRMAGWQRAVRAAKAWADDTQ.

Threonine 13 contributes to the ADP binding site. Residues threonine 13, threonine 14, and serine 15 each coordinate ATP. Threonine 13 is a sn-glycerol 3-phosphate binding site. Arginine 17 is a binding site for ADP. Sn-glycerol 3-phosphate-binding residues include arginine 83, glutamate 84, tyrosine 135, and aspartate 244. Glycerol is bound by residues arginine 83, glutamate 84, tyrosine 135, aspartate 244, and glutamine 245. ADP is bound by residues threonine 266 and glycine 309. The ATP site is built by threonine 266, glycine 309, glutamine 313, and glycine 410. 2 residues coordinate ADP: glycine 410 and asparagine 414.

It belongs to the FGGY kinase family.

It carries out the reaction glycerol + ATP = sn-glycerol 3-phosphate + ADP + H(+). The protein operates within polyol metabolism; glycerol degradation via glycerol kinase pathway; sn-glycerol 3-phosphate from glycerol: step 1/1. Inhibited by fructose 1,6-bisphosphate (FBP). Key enzyme in the regulation of glycerol uptake and metabolism. Catalyzes the phosphorylation of glycerol to yield sn-glycerol 3-phosphate. The chain is Glycerol kinase from Burkholderia ambifaria (strain MC40-6).